We begin with the raw amino-acid sequence, 226 residues long: Orotate phosphoribosyltransferase (226 aa).

5-phospho-alpha-D-ribose 1-diphosphate is bound by residues Arg-107, Lys-108, Lys-111, and 133 to 141; that span reads EDLTTDGGS. Thr-137 contacts orotate.

This sequence belongs to the purine/pyrimidine phosphoribosyltransferase family. PyrE subfamily. As to quaternary structure, homodimer. Requires Mg(2+) as cofactor.

The catalysed reaction is orotidine 5'-phosphate + diphosphate = orotate + 5-phospho-alpha-D-ribose 1-diphosphate. It functions in the pathway pyrimidine metabolism; UMP biosynthesis via de novo pathway; UMP from orotate: step 1/2. Its function is as follows. Catalyzes the transfer of a ribosyl phosphate group from 5-phosphoribose 1-diphosphate to orotate, leading to the formation of orotidine monophosphate (OMP). This chain is Orotate phosphoribosyltransferase, found in Ruegeria sp. (strain TM1040) (Silicibacter sp.).